Consider the following 409-residue polypeptide: uncharacterized protein (409 aa).

Zn(2+) is bound at residue histidine 46. The Proton acceptor role is filled by glutamate 49. 2 residues coordinate Zn(2+): histidine 50 and glutamate 126.

Belongs to the peptidase M16 family. Zn(2+) serves as cofactor.

This is an uncharacterized protein from Bacillus subtilis (strain 168).